A 321-amino-acid polypeptide reads, in one-letter code: Transaldolase (321 aa).

The active-site Schiff-base intermediate with substrate is Lys-132.

The protein belongs to the transaldolase family. Type 1 subfamily. Homodimer.

It localises to the cytoplasm. The catalysed reaction is D-sedoheptulose 7-phosphate + D-glyceraldehyde 3-phosphate = D-erythrose 4-phosphate + beta-D-fructose 6-phosphate. It functions in the pathway carbohydrate degradation; pentose phosphate pathway; D-glyceraldehyde 3-phosphate and beta-D-fructose 6-phosphate from D-ribose 5-phosphate and D-xylulose 5-phosphate (non-oxidative stage): step 2/3. Transaldolase is important for the balance of metabolites in the pentose-phosphate pathway. The chain is Transaldolase from Rhizobium leguminosarum bv. trifolii (strain WSM2304).